Here is a 603-residue protein sequence, read N- to C-terminus: Sulfoacetaldehyde acetyltransferase (603 aa).

The protein belongs to the TPP enzyme family. Mg(2+) serves as cofactor. The cofactor is thiamine diphosphate.

It carries out the reaction acetyl phosphate + sulfite + H(+) = sulfoacetaldehyde + phosphate. In terms of biological role, catalyzes the degradation of sulfoacetaldehyde into sulfite and acetyl phosphate. Involved in sulfolactate degradation. In Roseovarius nubinhibens (strain ATCC BAA-591 / DSM 15170 / ISM), this protein is Sulfoacetaldehyde acetyltransferase.